A 309-amino-acid polypeptide reads, in one-letter code: tRNA uridine(34) hydroxylase (309 aa).

The Rhodanese domain maps to Arg137 to Leu232. Cys192 (cysteine persulfide intermediate) is an active-site residue.

This sequence belongs to the TrhO family.

It carries out the reaction uridine(34) in tRNA + AH2 + O2 = 5-hydroxyuridine(34) in tRNA + A + H2O. Functionally, catalyzes oxygen-dependent 5-hydroxyuridine (ho5U) modification at position 34 in tRNAs. This is tRNA uridine(34) hydroxylase from Corynebacterium jeikeium (strain K411).